A 761-amino-acid polypeptide reads, in one-letter code: Autophagy-related protein 13 (761 aa).

3 stretches are compositionally biased toward low complexity: residues 1-10 (MLSDFKQQQQ), 290-303 (SSSV…TSLK), and 327-340 (STSP…ISQP). Disordered regions lie at residues 1-25 (MLSD…HDDT), 277-367 (FHKR…SNKS), 398-456 (ISGT…QSDL), 488-507 (DLRL…NMSI), 544-642 (HSSR…SSIS), and 691-761 (YQNV…SRNF). Polar residues-rich tracts occupy residues 344 to 367 (PIQN…SNKS) and 400 to 411 (GTSVPRSFSSST). Over residues 429–444 (RFASSFGSRASRRYSS) the composition is skewed to low complexity. Polar residues predominate over residues 445–456 (TSIRQQTPQSDL). Residues 566 to 590 (QQQQQQQQNQQQSQSPHTNTTSSIH) show a composition bias toward low complexity. Residues 600-613 (RMKDARPRSEDHQQ) show a composition bias toward basic and acidic residues. Positions 614–631 (TKFSAARRSSNISPTTAV) are enriched in polar residues. Low complexity predominate over residues 632 to 642 (PSSIGTPSSIS). Residues 695-709 (FDDDDEDDNDEEEGD) are compositionally biased toward acidic residues. A compositionally biased stretch (basic and acidic residues) spans 710–720 (REGNQLHEGRN). Residues 721–730 (STESSQNQSK) are compositionally biased toward polar residues.

The protein belongs to the ATG13 family. Fungi subfamily. As to quaternary structure, interacts with ATG1 to form the ATG1-ATG13 kinase complex.

It localises to the cytoplasm. Its subcellular location is the preautophagosomal structure. Functionally, plays a key role in autophagy. Activates the atg1 kinase in a nutritional condition dependent manner through the TOR pathway, leading to autophagy. Also involved in cytoplasm to vacuole transport (Cvt) and more specifically in Cvt vesicle formation. Seems to play a role in the switching machinery regulating the conversion between the Cvt pathway and autophagy. Finally, plays an important role in biofilm formation and resistance to antifungal compounds such as fluconazole, itraconazole, terbinafine and caspofungin. This Candida albicans (strain SC5314 / ATCC MYA-2876) (Yeast) protein is Autophagy-related protein 13.